The chain runs to 1117 residues: MCIVKTLHLITHVMKEYNSQFTEGSDFSLIEEQILEFWKENNIFKKSIENRDEKRRFIFYDGPPFANGLPHYGHLLTGFIKDTVARYKTMAGFRVDRRFGWDCHGLPAEMLAEKELGVSGKLAIEKFGIEKFNNYCRNSVMKFSREWKQYIDRQSRWVDFENDYKTMNLSFMESIMWSFYQLWQKGLIYESIKIVPYSWACQTPLSNFETRIDNAYRQKTSKTVTLAFELLDAPKSLIVDNITAYKILVWTTTPWTLPCNLALAISPNIKYCGAIINKEMYIFSRAYLKNFEDHCRKNNIEYLIHNGDICYLSLEYLSYKPVFNYFIDIKNAFKVLVADFVVEDEGTGIVHMAPGFGEDDFILCKKQGIPDIDDKDTSKLLATICPIDDGGKFTERISDFVNMHVFDTNDQIISILKAKNLCFKTDQYLHNYPHCWRTDTPLIYRAMSSWYVEVTKIKNRMIDLNKDVNWIPSHIRSGQFGKWLENAKDWAISRNRFWGTPLPVWKSDNPNYPRVDVYGSIKKVFDDIKALEEDFDIPIDDLHRPYIDNLVRPNPDDPTGKSMMRRVTDVFDCWFESGSMPYAQLHYPFENKELFENYFPADFITEYVAQTRGWFYTLFVLSTALFDKPPFKNCICHGVVLDTQGQKLSKRLNNYADPMEIFKQYGSDAMRFLMLSHTVSYGGDLLLDKDGVMVRDVIRNVIKPMWNSYNFFTIYADIDKVNARVISDLDEVDNIMDKYIMCECISTIQSIFNAMEEFDQSVGNYGYNIKAACNSIVQFFEVLNNWYIRRCRSRFWSSEITKDKVNAYNTLYTVMYYMVKVSAPFLPAITEAIWQKLNFQEEESVHLSLLPNIEHITLKDEDQKNIQYMKLIINICGCVLSIRNVRNIRVRQPLNKITIYSYNNNDLFNLPVKYQNILLDEINVKSIVFKSNIEDIASFQLKLNFPELGKRIPEKMKNLISLLKSNQWKILENGQLMLGIREGEHYILEDNEYTLNLKVHSEFASTITLGPNLLGVLVLDNTLTDELIMEGIARDIVRIIQQSRKDNKFNVSDKIDVVICTQDKMVKNSVQAWYEYIVQQTLSLSLVIYENLDANNVAEYCKTTMKDRNLTLFIKKL.

The 'HIGH' region signature appears at 64–74 (PFANGLPHYGH). The short motif at 647–651 (KLSKR) is the 'KMSKS' region element. Lys-650 contributes to the ATP binding site.

The protein belongs to the class-I aminoacyl-tRNA synthetase family. IleS type 2 subfamily. In terms of assembly, monomer. Zn(2+) serves as cofactor.

It is found in the cytoplasm. It catalyses the reaction tRNA(Ile) + L-isoleucine + ATP = L-isoleucyl-tRNA(Ile) + AMP + diphosphate. In terms of biological role, catalyzes the attachment of isoleucine to tRNA(Ile). As IleRS can inadvertently accommodate and process structurally similar amino acids such as valine, to avoid such errors it has two additional distinct tRNA(Ile)-dependent editing activities. One activity is designated as 'pretransfer' editing and involves the hydrolysis of activated Val-AMP. The other activity is designated 'posttransfer' editing and involves deacylation of mischarged Val-tRNA(Ile). This is Isoleucine--tRNA ligase from Ehrlichia ruminantium (strain Welgevonden).